Here is a 280-residue protein sequence, read N- to C-terminus: UBX domain-containing protein 10 (280 aa).

Residues serine 41–aspartate 94 are disordered. A Phosphoserine modification is found at serine 87. Positions aspartate 194 to isoleucine 271 constitute a UBX domain.

Belongs to the UBXN10 family. Interacts with CLUAP1; the interaction is direct and mediates interaction with the intraflagellar transport complex B (IFT-B). Interacts with VCP; the interaction is direct.

It localises to the cell projection. The protein resides in the cilium. In terms of biological role, VCP/p97-binding protein required for ciliogenesis. Acts as a tethering factor that facilitates recruitment of VCP/p97 to the intraflagellar transport complex B (IFT-B) in cilia. UBX domain-containing proteins act as tethering factors for VCP/p97 and may specify substrate specificity of VCP/p97. The protein is UBX domain-containing protein 10 of Homo sapiens (Human).